A 1663-amino-acid chain; its full sequence is TPR repeat-containing protein DDB_G0287407 (1663 aa).

Disordered regions lie at residues 84 to 109 and 326 to 359; these read RKTQPTSSNGSTSTTTTTTTTTQKGQ and SEYSSTNDDGENDQSDDDDDNEDDDDFVEKNSNQ. Low complexity predominate over residues 89–105; the sequence is TSSNGSTSTTTTTTTTT. Acidic residues predominate over residues 333 to 352; sequence DDGENDQSDDDDDNEDDDDF. TPR repeat units lie at residues 1110 to 1143, 1150 to 1183, 1192 to 1225, 1234 to 1269, 1278 to 1311, and 1320 to 1353; these read SDVWFRVASFLEELSQFDGAEVLYNKCRELYINN, AKVDRAMGRMYLTMGQNDKSDSKFRLALSIYTKE, AITLNLLGTLATNRCKFDEAKQILNQAMNICESK, ADIAYSLGSVCFVEPNRKLEVAEAYFARSLELTESK, ARILTRLGSLNIEKDTYADAEAFFKAALKIYEAR, and SQILRHMISLYEVQENYKMAEQCCIRALAITKKI. Disordered regions lie at residues 1500-1528 and 1544-1571; these read VAQPTSFNSPVQPPSPRTQQAIQQGQQQR and QKVSSLQQQPQQQQQQQPSQGYGNRQNT. Positions 1516-1547 form a coiled coil; that stretch reads RTQQAIQQGQQQRQQVQQQQQQVQQQMSQKVS. 2 stretches are compositionally biased toward low complexity: residues 1518 to 1528 and 1544 to 1563; these read QQAIQQGQQQR and QKVSSLQQQPQQQQQQQPSQ.

This chain is TPR repeat-containing protein DDB_G0287407, found in Dictyostelium discoideum (Social amoeba).